A 207-amino-acid polypeptide reads, in one-letter code: Guanylate kinase (207 aa).

A Guanylate kinase-like domain is found at G10–Q187. Position 17-24 (A17–T24) interacts with ATP.

Belongs to the guanylate kinase family.

The protein localises to the cytoplasm. It carries out the reaction GMP + ATP = GDP + ADP. In terms of biological role, essential for recycling GMP and indirectly, cGMP. This is Guanylate kinase from Syntrophus aciditrophicus (strain SB).